The sequence spans 569 residues: MSQNVDEKVVHDDASVIRSVDRSESDSYPDSVSPEGAEPSEEEMKTLRRVARRVPLACWLVAIVELAERFSYYGLSTPFQNYMQYTKTDHPRGVLGLNQSGATALSYFWQFWCYVTPIFGAWVADTYLGKYNTISIFCVLYIIGILILFVTSLPSMSQNTSLGGFITAVIVIGIGTGGVKSNVSPLIADQVPKEKPSIKVLKSGERVIEDPNLTIQNVFMFFYLMINIGSLSVIATTELESRVDFWAAYLLPLCFFVIALLALFLGKKVYHKVPVGDKVIAKSFKCSFLALTKLNYDAARPSLNPDKEFPWTDKFVDEVQRALYACKVFLIYPIYWLVYGQMTNNFVSSAGQMELHGLPNDILQAIDSITIIIFIPICESIVYPFIRRFTPFRAITKIFWGFMFGAAAMVYAAVLQHFIYKAGPCYDSPNDCPGFKNIPNHIHVALQTPAYFLIAISEILASITGLEYAYTKAPVSMKSFIMSIFLVQNAFGSALGIALSPVSKDPKMVWTYTGLAVSCFIAGWVFWFLFKHYNDREDKWNDLDYEQDDGYNGELEPVVSLTRSFKDMS.

The segment covering 1-25 (MSQNVDEKVVHDDASVIRSVDRSES) has biased composition (basic and acidic residues). The tract at residues 1 to 43 (MSQNVDEKVVHDDASVIRSVDRSESDSYPDSVSPEGAEPSEEE) is disordered. Residues 54–74 (VPLACWLVAIVELAERFSYYG) traverse the membrane as a helical segment. N-linked (GlcNAc...) asparagine glycosylation is present at asparagine 98. Helical transmembrane passes span 104-124 (ALSYFWQFWCYVTPIFGAWVA), 134-154 (ISIFCVLYIIGILILFVTSLP), and 159-179 (NTSLGGFITAVIVIGIGTGGV). N-linked (GlcNAc...) asparagine glycosylation is present at asparagine 212. The next 8 helical transmembrane spans lie at 215-235 (IQNVFMFFYLMINIGSLSVIA), 245-265 (FWAAYLLPLCFFVIALLALFL), 322-342 (ALYACKVFLIYPIYWLVYGQM), 366-386 (IDSITIIIFIPICESIVYPFI), 398-418 (IFWGFMFGAAAMVYAAVLQHF), 444-464 (VALQTPAYFLIAISEILASIT), 479-499 (SFIMSIFLVQNAFGSALGIAL), and 510-530 (WTYTGLAVSCFIAGWVFWFLF).

This sequence belongs to the major facilitator superfamily. Proton-dependent oligopeptide transporter (POT/PTR) (TC 2.A.17) family.

The protein localises to the cell membrane. It catalyses the reaction a dipeptide(out) + H(+)(out) = a dipeptide(in) + H(+)(in). The catalysed reaction is an L-amino acid tripeptide(out) + H(+)(out) = an L-amino acid tripeptide(in) + H(+)(in). Its function is as follows. Peptide transporter that exploits the inwardly directed proton motive force to facilitate the cellular uptake of di/tripeptides. Shows strong uptake specificity towards the dipeptides Tyr-Phe and Leu-Gly and the tripeptide Phe-Gly-Gly, when compared to PTR_A and PTR_B. Also able to import peptide-based antifungals such as the peptide-nucleoside drug nikkomycin Z as well as the glucosamine-6-phosphate synthase inhibitor, L-norvalyl-N3-(4-methoxyfumaroyl)-L-2,3-diaminopropionoic acid (Nva-FMDP). This chain is Peptide transporter PTR_C, found in Candidozyma auris (Yeast).